Consider the following 108-residue polypeptide: Phosphoribosyl-ATP pyrophosphatase (108 aa).

The protein belongs to the PRA-PH family.

It localises to the cytoplasm. The catalysed reaction is 1-(5-phospho-beta-D-ribosyl)-ATP + H2O = 1-(5-phospho-beta-D-ribosyl)-5'-AMP + diphosphate + H(+). Its pathway is amino-acid biosynthesis; L-histidine biosynthesis; L-histidine from 5-phospho-alpha-D-ribose 1-diphosphate: step 2/9. This is Phosphoribosyl-ATP pyrophosphatase from Trichlorobacter lovleyi (strain ATCC BAA-1151 / DSM 17278 / SZ) (Geobacter lovleyi).